The following is a 131-amino-acid chain: Phosphoribosyl-AMP cyclohydrolase (131 aa).

D78 provides a ligand contact to Mg(2+). A Zn(2+)-binding site is contributed by C79. Residues D80 and D82 each contribute to the Mg(2+) site. Zn(2+) contacts are provided by C96 and C103.

Belongs to the PRA-CH family. Homodimer. The cofactor is Mg(2+). Requires Zn(2+) as cofactor.

The protein localises to the cytoplasm. The catalysed reaction is 1-(5-phospho-beta-D-ribosyl)-5'-AMP + H2O = 1-(5-phospho-beta-D-ribosyl)-5-[(5-phospho-beta-D-ribosylamino)methylideneamino]imidazole-4-carboxamide. It functions in the pathway amino-acid biosynthesis; L-histidine biosynthesis; L-histidine from 5-phospho-alpha-D-ribose 1-diphosphate: step 3/9. Its function is as follows. Catalyzes the hydrolysis of the adenine ring of phosphoribosyl-AMP. The polypeptide is Phosphoribosyl-AMP cyclohydrolase (Neisseria meningitidis serogroup A / serotype 4A (strain DSM 15465 / Z2491)).